A 1091-amino-acid chain; its full sequence is ATP-citrate synthase (1091 aa).

The 262-residue stretch at 4-265 folds into the ATP-grasp domain; it reads KAISEQTGKE…LDAKSGASLK (262 aa). ATP is bound by residues Lys-58, Arg-66, Gly-67, Pro-109, Val-111, and Glu-118. Tyr-131 carries the post-translational modification Phosphotyrosine. Asp-216 provides a ligand contact to ATP. Mg(2+) contacts are provided by Asp-257, Ser-260, and Ala-262. Residue Ser-263 is modified to Phosphoserine. Citrate is bound by residues Gly-309, Asn-346, Thr-348, Tyr-364, and Arg-379. The span at 442–457 shows a compositional bias: low complexity; the sequence is SGSTSTPAPSRTASFS. The disordered stretch occupies residues 442-471; sequence SGSTSTPAPSRTASFSESRTDEVAPAKKAK. Thr-447 carries the phosphothreonine modification. Ser-451 is subject to Phosphoserine. Position 455 is a phosphoserine; by PKA and PKB/AKT1 or PKB/AKT2 or BCKDK (Ser-455). Ser-459 bears the Phosphoserine mark. 3 positions are modified to N6-acetyllysine; alternate: Lys-530, Lys-536, and Lys-544. Glycyl lysine isopeptide (Lys-Gly) (interchain with G-Cter in ubiquitin); alternate cross-links involve residues Lys-530, Lys-536, and Lys-544. The residue at position 629 (Thr-629) is a Phosphothreonine. Ser-653 carries the phosphoserine modification. A Phosphotyrosine modification is found at Tyr-672. Residue His-750 is the Tele-phosphohistidine intermediate of the active site. A CoA-binding site is contributed by 769 to 779; sequence LKEAGVFVPRS. Position 829 is a phosphoserine (Ser-829). 4 positions are modified to N6-acetyllysine: Lys-938, Lys-958, Lys-968, and Lys-1067. Ser-1090 carries the post-translational modification Phosphoserine.

The protein in the N-terminal section; belongs to the succinate/malate CoA ligase beta subunit family. This sequence in the C-terminal section; belongs to the succinate/malate CoA ligase alpha subunit family. Homotetramer. The cofactor is Mg(2+). Phosphorylated by PKA and GSK3 in a sequential manner; phosphorylation results in activation of its activity. Phosphorylation on Thr-447 and Ser-451 depends on the phosphorylation state of Ser-455. Phosphorylation on Ser-455 is decreased by prior phosphorylation on the other 2 residues. Phosphorylated at Ser-455 by BCKDK and dephosphorylated by protein phosphatase PPM1K. In terms of processing, ISGylated. Post-translationally, acetylated at Lys-530, Lys-536 and Lys-544 by KAT2B/PCAF. Acetylation is promoted by glucose and stabilizes the protein, probably by preventing ubiquitination at the same sites. Acetylation promotes de novo lipid synthesis. Deacetylated by SIRT2. Ubiquitinated at Lys-530, Lys-536 and Lys-544 by the BCR(KLHL25) E3 ubiquitin ligase complex and UBR4, leading to its degradation. Ubiquitination is probably inhibited by acetylation at same site. BCR(KLHL25)-mediated degradation of ACLY promotes fatty acid oxidation and is required for differentiation of inducible regulatory T (iTreg) cells.

Its subcellular location is the cytoplasm. It is found in the cytosol. The catalysed reaction is oxaloacetate + acetyl-CoA + ADP + phosphate = citrate + ATP + CoA. Its activity is regulated as follows. Phosphorylation results in activation of its activity. Glucose 6-phosphate, fructose 6-phosphate, fructose 2,6-bisphosphate, ribulose 5-phosphate, and fructose 1,6-bisphosphate also act as activators. Catalyzes the cleavage of citrate into oxaloacetate and acetyl-CoA, the latter serving as common substrate in multiple biochemical reactions in protein, carbohydrate and lipid metabolism. This chain is ATP-citrate synthase (ACLY), found in Bos taurus (Bovine).